A 320-amino-acid chain; its full sequence is Protease HtpX homolog (320 aa).

Transmembrane regions (helical) follow at residues 6–26 (TAML…LIGG) and 28–48 (AGMM…YWNS). Zn(2+) is bound at residue His130. Glu131 is an active-site residue. His134 is a binding site for Zn(2+). The next 2 membrane-spanning stretches (helical) occupy residues 145–165 (ITAT…FFGG) and 173–193 (PLGF…AMLV). Zn(2+) is bound at residue Glu202. The segment at 281 to 320 (GGMNVSTPPVRAANPSRKSRSVPDTGLGRGGSQPPKGPWS) is disordered.

This sequence belongs to the peptidase M48B family. The cofactor is Zn(2+).

It localises to the cell inner membrane. This Rhizobium leguminosarum bv. trifolii (strain WSM2304) protein is Protease HtpX homolog.